The chain runs to 208 residues: CD209 antigen-like protein E (208 aa).

Residues 1–16 (MRAPQMGSLGFLDKGH) lie on the Cytoplasmic side of the membrane. A helical; Signal-anchor for type II membrane protein transmembrane segment spans residues 17–37 (IPLVLQLLFLILFTGLLVAII). The Extracellular portion of the chain corresponds to 38 to 208 (IQVSKMPSSE…KIATTCLSKW (171 aa)). 3 disulfides stabilise this stretch: C77-C88, C105-C197, and C176-C189. Residues 83-198 (FFNGNCYFFS…CEQRKFWICK (116 aa)) enclose the C-type lectin domain.

It localises to the membrane. Putative pathogen-recognition receptor. May mediate the endocytosis of pathogens which are subsequently degraded in lysosomal compartments. The polypeptide is CD209 antigen-like protein E (Cd209e) (Mus musculus (Mouse)).